An 811-amino-acid chain; its full sequence is Abnormal pharyngeal pumping eat-20 (811 aa).

The signal sequence occupies residues methionine 1–alanine 20. The Extracellular segment spans residues glutamine 21–tryptophan 749. Asparagine 90, asparagine 171, and asparagine 232 each carry an N-linked (GlcNAc...) asparagine glycan. 3 consecutive EGF-like domains span residues proline 220–glutamate 257, leucine 258–glutamate 293, and alanine 301–asparagine 335. Disulfide bonds link cysteine 224–cysteine 235, cysteine 229–cysteine 245, cysteine 247–cysteine 256, cysteine 261–cysteine 272, cysteine 266–cysteine 281, cysteine 283–cysteine 292, cysteine 305–cysteine 314, cysteine 309–cysteine 323, and cysteine 325–cysteine 334. N-linked (GlcNAc...) asparagine glycosylation is present at asparagine 371. 3 disordered regions span residues phenylalanine 544–threonine 579, phenylalanine 592–threonine 659, and proline 690–serine 739. The span at aspartate 551 to glutamate 567 shows a compositional bias: acidic residues. Positions proline 570–threonine 579 are enriched in polar residues. The span at aspartate 597–threonine 612 shows a compositional bias: acidic residues. Residues proline 626 to threonine 639 are compositionally biased toward low complexity. Composition is skewed to acidic residues over residues methionine 640–glutamate 655 and isoleucine 705–glutamate 717. The helical transmembrane segment at isoleucine 750–valine 770 threads the bilayer. Topologically, residues leucine 771–isoleucine 811 are cytoplasmic.

It is found in the membrane. Functionally, regulates pharyngeal pumping during feeding. This Caenorhabditis briggsae protein is Abnormal pharyngeal pumping eat-20 (eat-20).